The primary structure comprises 332 residues: tRNA-dihydrouridine synthase B (332 aa).

Residues 16–18 and Gln70 contribute to the FMN site; that span reads PMA. Residue Cys100 is the Proton donor of the active site. Residues Lys139, 200–202, and 224–225 contribute to the FMN site; these read NGD and GR.

This sequence belongs to the Dus family. DusB subfamily. It depends on FMN as a cofactor.

It catalyses the reaction a 5,6-dihydrouridine in tRNA + NAD(+) = a uridine in tRNA + NADH + H(+). The catalysed reaction is a 5,6-dihydrouridine in tRNA + NADP(+) = a uridine in tRNA + NADPH + H(+). In terms of biological role, catalyzes the synthesis of 5,6-dihydrouridine (D), a modified base found in the D-loop of most tRNAs, via the reduction of the C5-C6 double bond in target uridines. This Xanthomonas axonopodis pv. citri (strain 306) protein is tRNA-dihydrouridine synthase B.